The following is a 378-amino-acid chain: Sterol 24-C-methyltransferase erg6 (378 aa).

It belongs to the class I-like SAM-binding methyltransferase superfamily. Erg6/SMT family.

It is found in the nucleus. It localises to the endoplasmic reticulum. It carries out the reaction zymosterol + S-adenosyl-L-methionine = fecosterol + S-adenosyl-L-homocysteine + H(+). The catalysed reaction is lanosterol + S-adenosyl-L-methionine = eburicol + S-adenosyl-L-homocysteine + H(+). It participates in steroid metabolism; ergosterol biosynthesis. Its function is as follows. Sterol 24-C-methyltransferase; part of the third module of ergosterol biosynthesis pathway that includes by the late steps of the pathway. Erg6 catalyzes the methyl transfer from S-adenosyl-methionine to the C-24 of zymosterol to form fecosterol. The third module or late pathway involves the ergosterol synthesis itself through consecutive reactions that mainly occur in the endoplasmic reticulum (ER) membrane. Firstly, the squalene synthase erg9 catalyzes the condensation of 2 farnesyl pyrophosphate moieties to form squalene, which is the precursor of all steroids. Secondly, squalene is converted into lanosterol by the consecutive action of the squalene epoxidase erg1 and the lanosterol synthase erg7. The lanosterol 14-alpha-demethylase erg11/cyp1 catalyzes C14-demethylation of lanosterol to produce 4,4'-dimethyl cholesta-8,14,24-triene-3-beta-ol. In the next steps, a complex process involving various demethylation, reduction and desaturation reactions catalyzed by the C-14 reductase erg24 and the C-4 demethylation complex erg25-erg26-erg27 leads to the production of zymosterol. Erg28 likely functions in the C-4 demethylation complex reaction by tethering erg26 and Erg27 to the endoplasmic reticulum or to facilitate interaction between these proteins. Then, the sterol 24-C-methyltransferase erg6 catalyzes the methyl transfer from S-adenosyl-methionine to the C-24 of zymosterol to form fecosterol. The C-8 sterol isomerase erg2 catalyzes the reaction which results in unsaturation at C-7 in the B ring of sterols and thus converts fecosterol to episterol. The sterol-C5-desaturases erg31 and erg32 then catalyze the introduction of a C-5 double bond in the B ring to produce 5-dehydroepisterol. The C-22 sterol desaturase erg5 further converts 5-dehydroepisterol into ergosta-5,7,22,24(28)-tetraen-3beta-ol by forming the C-22(23) double bond in the sterol side chain. Finally, ergosta-5,7,22,24(28)-tetraen-3beta-ol is substrate of the C-24(28) sterol reductase erg4 to produce ergosterol. In the genus Schizosaccharomyces, a second route exists between lanosterol and fecosterol, via the methylation of lanosterol to eburicol by erg6, followed by C14-demethylation by erg11/cyp1 and C4-demethylation by the demethylation complex erg25-erg26-erg27. This is Sterol 24-C-methyltransferase erg6 from Schizosaccharomyces pombe (strain 972 / ATCC 24843) (Fission yeast).